Consider the following 319-residue polypeptide: Methionyl-tRNA formyltransferase (319 aa).

115 to 118 contacts (6S)-5,6,7,8-tetrahydrofolate; that stretch reads SLLP.

It belongs to the Fmt family.

The catalysed reaction is L-methionyl-tRNA(fMet) + (6R)-10-formyltetrahydrofolate = N-formyl-L-methionyl-tRNA(fMet) + (6S)-5,6,7,8-tetrahydrofolate + H(+). Its function is as follows. Attaches a formyl group to the free amino group of methionyl-tRNA(fMet). The formyl group appears to play a dual role in the initiator identity of N-formylmethionyl-tRNA by promoting its recognition by IF2 and preventing the misappropriation of this tRNA by the elongation apparatus. The chain is Methionyl-tRNA formyltransferase from Lactococcus lactis subsp. lactis (strain IL1403) (Streptococcus lactis).